Consider the following 44-residue polypeptide: Large ribosomal subunit protein bL34 (44 aa).

Residues 1-26 (MKMTFQPKKRQRAKVHGFRQRMKTAG) are disordered. The span at 7-22 (PKKRQRAKVHGFRQRM) shows a compositional bias: basic residues.

It belongs to the bacterial ribosomal protein bL34 family.

The chain is Large ribosomal subunit protein bL34 from Agathobacter rectalis (strain ATCC 33656 / DSM 3377 / JCM 17463 / KCTC 5835 / VPI 0990) (Eubacterium rectale).